The sequence spans 228 residues: Thermonuclease (228 aa).

The first 23 residues, 1-23, serve as a signal peptide directing secretion; sequence MTEYLLSAGICMAIVSILLIGMA. The propeptide occupies 24–60; that stretch reads ISNVSKGQYAKRFFYFATSCLVLTLVVVSSLSSSANA. Polar residues predominate over residues 58-70; sequence ANASQTDNGVNRS. A disordered region spans residues 58–83; it reads ANASQTDNGVNRSGSEDPTVYSATST. Aspartate 100 is a Ca(2+) binding site. The active site involves arginine 114. Ca(2+) is bound by residues aspartate 119 and threonine 120. Residues glutamate 122 and arginine 166 contribute to the active site.

It belongs to the thermonuclease family. Ca(2+) serves as cofactor.

Its subcellular location is the secreted. It carries out the reaction Endonucleolytic cleavage to nucleoside 3'-phosphates and 3'-phosphooligonucleotide end-products.. In terms of biological role, enzyme that catalyzes the hydrolysis of both DNA and RNA at the 5' position of the phosphodiester bond. The sequence is that of Thermonuclease (nuc) from Staphylococcus aureus (strain COL).